Consider the following 197-residue polypeptide: MSKATIELDFLGLEKKQTNNAPKPKFQKFLDRRRSFRDIQGAISKIDPEIIKSLLASTGNNSDSSAKSRSVPSTPREDQPQIPISPVHASLARSSTELVSGTVPMTIFYNGSVSVFQVSRNKAGEIMKVANEAASKKDESSMETDLSVILPTTLRPKLFGQNLEGDLPIARRKSLQRFLEKRKERLVSTSPYYPTSA.

Over residues 57–73 (STGNNSDSSAKSRSVPS) the composition is skewed to polar residues. Residues 57-84 (STGNNSDSSAKSRSVPSTPREDQPQIPI) form a disordered region. The Tify domain maps to 98–132 (LVSGTVPMTIFYNGSVSVFQVSRNKAGEIMKVANE). Residues 168 to 193 (PIARRKSLQRFLEKRKERLVSTSPYY) carry the Jas motif. Residues 170 to 177 (ARRKSLQR) carry the Nuclear localization signal motif.

Belongs to the TIFY/JAZ family. Homo- and heterodimer. Interacts with MYC2, MYC3, MYC4, AFPH2/NINJA, TIFY10A/JAZ1, TIFY10B/JAZ2, TIFY6B/JAZ3, TIFY6A/JAZ4, TIFY11B/JAZ6, TIFY5A/JAZ8, TIFY7/JAZ9, TIFY3A/JAZ11 and TIFY3B/JAZ12. Isoform 1 and isoform 2 interact with COI1. Isoform 3 does not interact with COI1. Interacts with RHD6 and RSL1. Post-translationally, ubiquitinated. Targeted for degradation by the SCF(COI1) E3 ubiquitin ligase-proteasome pathway during jasmonate signaling.

The protein resides in the nucleus. In terms of biological role, repressor of jasmonate (JA) responses that lacks the entire Jas domain and possesses severe JA insensitivity and resistance to JA-induced degradation. Acts as an endogenous repressor of JA signal output in JA-stimulated cells. Modulator of JA-controlled growth inhibition in response to wounding. Repressor of jasmonate (JA) responses that lacks part of the Jas domain and possesses JA insensitivity and partial resistance to JA-induced degradation. Functionally, repressor of jasmonate (JA) responses. Interacts with and suppresses RHD6 and RSL1 transcription factor activities to negatively regulate jasmonate-stimulated root hair development. This chain is Protein TIFY 9 (TIFY9), found in Arabidopsis thaliana (Mouse-ear cress).